Here is a 248-residue protein sequence, read N- to C-terminus: Uridylate kinase (248 aa).

15–18 is a binding site for ATP; the sequence is KLSG. Residues 23-28 form an involved in allosteric activation by GTP region; sequence GAEGFG. Residue G57 coordinates UMP. Residues G58 and R62 each contribute to the ATP site. Residues D77 and 138-145 each bind UMP; that span reads TGNPFFTT. 3 residues coordinate ATP: T165, Y171, and D174.

It belongs to the UMP kinase family. In terms of assembly, homohexamer.

The protein localises to the cytoplasm. The catalysed reaction is UMP + ATP = UDP + ADP. The protein operates within pyrimidine metabolism; CTP biosynthesis via de novo pathway; UDP from UMP (UMPK route): step 1/1. Allosterically activated by GTP. Inhibited by UTP. Functionally, catalyzes the reversible phosphorylation of UMP to UDP. In Yersinia enterocolitica serotype O:8 / biotype 1B (strain NCTC 13174 / 8081), this protein is Uridylate kinase.